The chain runs to 248 residues: Putative homeobox-leucine zipper protein HOX26 (248 aa).

Residues 50 to 118 (KKVAAAAVVA…GDEEGASRKK (69 aa)) form a disordered region. Over residues 79 to 89 (RQRRSCKKGRR) the composition is skewed to basic residues. A DNA-binding region (homeobox) is located at residues 114–173 (ASRKKLRLTGEQATLLEDSFRAHNILSHAEKQELAGKLGLSARQVEVWFQNRRARTKLKQ). The segment at 172–216 (KQTEADCDLLRRWCDHLAADNARLRRDLAELRRSSSSPPVSGLAV) is leucine-zipper.

This sequence belongs to the HD-ZIP homeobox family. Class II subfamily.

Its subcellular location is the nucleus. Its function is as follows. Probable transcription factor. The sequence is that of Putative homeobox-leucine zipper protein HOX26 (HOX26) from Oryza sativa subsp. japonica (Rice).